Here is a 231-residue protein sequence, read N- to C-terminus: MQVNLEDVKIEPSWKEALKGEFLSLYFGDIKEKLICAKRAGIVYPPSNLIFNAFNLTPFDTVKVVILGQDPYHGPNQAMGLSFSVPNGVRIPPSLVNIYKEIYDDLGIREPNSGDLTYWAKQGVLLLNASLTVGANMANSHSGFGWQIFTDAVIKILSRERENIVFLLWGNPAKAKIPLIDTNKHLVLTAAHPSPLARGAFFGCRHFSKTNFYLTQHAKTPIDWDLNNFQI.

Asp70 serves as the catalytic Proton acceptor.

It belongs to the uracil-DNA glycosylase (UDG) superfamily. UNG family.

The protein localises to the cytoplasm. The catalysed reaction is Hydrolyzes single-stranded DNA or mismatched double-stranded DNA and polynucleotides, releasing free uracil.. In terms of biological role, excises uracil residues from the DNA which can arise as a result of misincorporation of dUMP residues by DNA polymerase or due to deamination of cytosine. The chain is Uracil-DNA glycosylase from Campylobacter curvus (strain 525.92).